A 324-amino-acid chain; its full sequence is MRLLFAGTPQTALPSLRLLLESSHEVVAVLTRPDAPAGRGRTPRPSPVALAAEQAGLPVLKPRRLADPETLAALRSLNAELAVVVAYGALVPEPALAIPRHGWVNLHFSILPSWRGAAPVQHAILHGDEVTGATTFRLEPDLDTGPIYGTVTEPIRPDDTAGDLLNRLARTGARLLLDTVDGIAAGVLAPRPQPTEGVSYAPKITPADARISWSSPAFHVDRLIRAVTPEPGAWTTLAGRRIVLGPVRLAEPQHAPGATDDGSLAPGEIRVLAPGEIRVERDRVLVGTATTPVILGTVQPAGRRAMPAEAWARGARLAPGARFE.

Position 109 to 112 (109 to 112 (SILP)) interacts with (6S)-5,6,7,8-tetrahydrofolate.

Belongs to the Fmt family.

The enzyme catalyses L-methionyl-tRNA(fMet) + (6R)-10-formyltetrahydrofolate = N-formyl-L-methionyl-tRNA(fMet) + (6S)-5,6,7,8-tetrahydrofolate + H(+). In terms of biological role, attaches a formyl group to the free amino group of methionyl-tRNA(fMet). The formyl group appears to play a dual role in the initiator identity of N-formylmethionyl-tRNA by promoting its recognition by IF2 and preventing the misappropriation of this tRNA by the elongation apparatus. The protein is Methionyl-tRNA formyltransferase of Acidothermus cellulolyticus (strain ATCC 43068 / DSM 8971 / 11B).